The following is a 653-amino-acid chain: UvrABC system protein B (653 aa).

The 158-residue stretch at 25–182 (EGIERGVREQ…EKLVELQYKS (158 aa)) folds into the Helicase ATP-binding domain. 38–45 (GVTGSGKT) contacts ATP. Residues 91 to 114 (YYDYYQPEAYIPHSDVYIEKDALI) carry the Beta-hairpin motif. Residues 429–591 (QIADVVNESQ…ITPKSISKSV (163 aa)) form the Helicase C-terminal domain. The UVR domain occupies 616–651 (EEDIIKLQKEMLLHAENLEFEKALEIRNQINKLSQH).

It belongs to the UvrB family. In terms of assembly, forms a heterotetramer with UvrA during the search for lesions. Interacts with UvrC in an incision complex.

It is found in the cytoplasm. Functionally, the UvrABC repair system catalyzes the recognition and processing of DNA lesions. A damage recognition complex composed of 2 UvrA and 2 UvrB subunits scans DNA for abnormalities. Upon binding of the UvrA(2)B(2) complex to a putative damaged site, the DNA wraps around one UvrB monomer. DNA wrap is dependent on ATP binding by UvrB and probably causes local melting of the DNA helix, facilitating insertion of UvrB beta-hairpin between the DNA strands. Then UvrB probes one DNA strand for the presence of a lesion. If a lesion is found the UvrA subunits dissociate and the UvrB-DNA preincision complex is formed. This complex is subsequently bound by UvrC and the second UvrB is released. If no lesion is found, the DNA wraps around the other UvrB subunit that will check the other stand for damage. In Anaplasma phagocytophilum (strain HZ), this protein is UvrABC system protein B.